Reading from the N-terminus, the 1136-residue chain is Mitochondrial 3' processome subunit 3 (1136 aa).

Residues 1-97 constitute a mitochondrion transit peptide; sequence MKKAWAQLER…RGLVCTTVGD (97 aa).

In terms of assembly, component of the mitochondrial 3' processome (MPsome) complex composed at least of terminal uridylyltransferase KRET1/TUT1, 3'-5' exonuclease DSS1, MPSS1, MPSS2 and MPSS3. Within the complex, interacts with KRET1.

It localises to the mitochondrion. Its function is as follows. As part of the mitochondrial 3' processome (MPsome), involved in the maturation of guided RNA (gRNA) precursors. The sequence is that of Mitochondrial 3' processome subunit 3 from Trypanosoma brucei brucei.